A 209-amino-acid chain; its full sequence is Uracil phosphoribosyltransferase (209 aa).

5-phospho-alpha-D-ribose 1-diphosphate is bound by residues R79, R104, and 131–139 (DPMLATGNS). Uracil contacts are provided by residues I194 and 199 to 201 (GDA). D200 contributes to the 5-phospho-alpha-D-ribose 1-diphosphate binding site.

Belongs to the UPRTase family. It depends on Mg(2+) as a cofactor.

It catalyses the reaction UMP + diphosphate = 5-phospho-alpha-D-ribose 1-diphosphate + uracil. Its pathway is pyrimidine metabolism; UMP biosynthesis via salvage pathway; UMP from uracil: step 1/1. Allosterically activated by GTP. Its function is as follows. Catalyzes the conversion of uracil and 5-phospho-alpha-D-ribose 1-diphosphate (PRPP) to UMP and diphosphate. The polypeptide is Uracil phosphoribosyltransferase (Sinorhizobium medicae (strain WSM419) (Ensifer medicae)).